The chain runs to 61 residues: Potassium channel toxin alpha-KTx 3.18 (61 aa).

The N-terminal stretch at 1 to 23 is a signal peptide; it reads MKMFFTVLVTLFVCSMIIGICEG. Cystine bridges form between C30–C50, C36–C55, and C40–C57. Position 60 is a lysine amide (K60).

As to expression, expressed by the venom gland.

The protein localises to the secreted. Inhibits voltage-gated potassium channel rKv1.1/KCNA1 at nanomolar ranges (IC(50)=90 +-2 nM, reduction of current by 30% at 50 nM or toxin). The sequence is that of Potassium channel toxin alpha-KTx 3.18 from Mesobuthus eupeus (Lesser Asian scorpion).